We begin with the raw amino-acid sequence, 258 residues long: Small ribosomal subunit protein mS40 (258 aa).

The transit peptide at 1–35 (MAASVLNVLLRRLPYFSPFRGAYGVQVPLQTLCTK) directs the protein to the mitochondrion. At Ser-49 the chain carries Phosphoserine. A disordered region spans residues 221–258 (QGHLREESGPPPESMPKVPLTAPNEATSTEQAGPQSAL). Residues 244-258 (NEATSTEQAGPQSAL) are compositionally biased toward polar residues.

This sequence belongs to the bacterial ribosomal protein bS18 family. Mitochondrion-specific ribosomal protein mS40 subfamily. Component of the mitochondrial ribosome small subunit (28S) which comprises a 12S rRNA and about 30 distinct proteins.

It localises to the mitochondrion. The protein is Small ribosomal subunit protein mS40 of Bos taurus (Bovine).